A 199-amino-acid polypeptide reads, in one-letter code: Recombination protein RecR (199 aa).

The C4-type zinc-finger motif lies at 57–72 (CSICGNITESDPCEIC). The region spanning 80-176 (STIMVVEQPK…KVTRLAAGLA (97 aa)) is the Toprim domain.

Belongs to the RecR family.

Its function is as follows. May play a role in DNA repair. It seems to be involved in an RecBC-independent recombinational process of DNA repair. It may act with RecF and RecO. In Lactobacillus johnsonii (strain CNCM I-12250 / La1 / NCC 533), this protein is Recombination protein RecR.